The sequence spans 171 residues: Endoribonuclease YbeY (171 aa).

Zn(2+) contacts are provided by His130, His134, and His140.

The protein belongs to the endoribonuclease YbeY family. Zn(2+) is required as a cofactor.

It localises to the cytoplasm. Single strand-specific metallo-endoribonuclease involved in late-stage 70S ribosome quality control and in maturation of the 3' terminus of the 16S rRNA. The sequence is that of Endoribonuclease YbeY from Neisseria meningitidis serogroup A / serotype 4A (strain DSM 15465 / Z2491).